Reading from the N-terminus, the 132-residue chain is Small ribosomal subunit protein uS11 (132 aa).

This sequence belongs to the universal ribosomal protein uS11 family. As to quaternary structure, part of the 30S ribosomal subunit.

Its function is as follows. Located on the platform of the 30S subunit. The chain is Small ribosomal subunit protein uS11 from Caldivirga maquilingensis (strain ATCC 700844 / DSM 13496 / JCM 10307 / IC-167).